A 548-amino-acid polypeptide reads, in one-letter code: Chaperonin GroEL (548 aa).

Residues 29 to 32, lysine 50, 86 to 90, glycine 416, and aspartate 497 each bind ATP; these read TLGP and DGTTT.

This sequence belongs to the chaperonin (HSP60) family. As to quaternary structure, forms a cylinder of 14 subunits composed of two heptameric rings stacked back-to-back. Interacts with the co-chaperonin GroES.

It is found in the cytoplasm. The enzyme catalyses ATP + H2O + a folded polypeptide = ADP + phosphate + an unfolded polypeptide.. Functionally, together with its co-chaperonin GroES, plays an essential role in assisting protein folding. The GroEL-GroES system forms a nano-cage that allows encapsulation of the non-native substrate proteins and provides a physical environment optimized to promote and accelerate protein folding. The polypeptide is Chaperonin GroEL (Neorickettsia sennetsu (strain ATCC VR-367 / Miyayama) (Ehrlichia sennetsu)).